Reading from the N-terminus, the 290-residue chain is MWTPPRNDQQYLNWQWYSSILSSHAAMCGCPDAVAHFNHLASVLRAPQNPPPPGPQRNLPLRRLPALPAAPEAPGDRAPWPMAGGAEGEDGGAGGDADHGGAAGGPEDADLLDAVAAAETRPQETQEGHRGVPLQPRRGAKRKLTFPPSQAPQTSPPVGRLAAGGKRVAKLRGRDADRLPAAQAAAAATANPGSQTQTPVQPSPKNPPKSRYQPYLVTKGGGSSILISNSTINMFGDPKPYNPSSNDWKEEYEACRIWDRPPRGNLRDPPFYPWAPKENQYRVNFKLGFQ.

Positions 67 to 218 (LPAAPEAPGD…KSRYQPYLVT (152 aa)) are disordered. Residues 121–130 (RPQETQEGHR) are compositionally biased toward basic and acidic residues. Residues 181-190 (AAQAAAAATA) show a composition bias toward low complexity. Over residues 191–200 (NPGSQTQTPV) the composition is skewed to polar residues.

This chain is ORF2/4 protein, found in Torque teno virus (isolate Human/Japan/TRM1/1999) (TTV).